A 387-amino-acid chain; its full sequence is S-adenosylmethionine synthase (387 aa).

His17 provides a ligand contact to ATP. Asp19 contacts Mg(2+). Glu45 contributes to the K(+) binding site. L-methionine-binding residues include Glu58 and Gln101. Residues 101–111 (QSPDIAQGVDR) are flexible loop. ATP-binding positions include 168–170 (DAK), 234–235 (RF), Asp243, 249–250 (RK), Ala266, and Lys270. Asp243 serves as a coordination point for L-methionine. An L-methionine-binding site is contributed by Lys274.

Belongs to the AdoMet synthase family. Homotetramer; dimer of dimers. It depends on Mg(2+) as a cofactor. Requires K(+) as cofactor.

It is found in the cytoplasm. The enzyme catalyses L-methionine + ATP + H2O = S-adenosyl-L-methionine + phosphate + diphosphate. It participates in amino-acid biosynthesis; S-adenosyl-L-methionine biosynthesis; S-adenosyl-L-methionine from L-methionine: step 1/1. Its function is as follows. Catalyzes the formation of S-adenosylmethionine (AdoMet) from methionine and ATP. The overall synthetic reaction is composed of two sequential steps, AdoMet formation and the subsequent tripolyphosphate hydrolysis which occurs prior to release of AdoMet from the enzyme. The polypeptide is S-adenosylmethionine synthase (Bordetella petrii (strain ATCC BAA-461 / DSM 12804 / CCUG 43448)).